Here is a 337-residue protein sequence, read N- to C-terminus: MRVLGIETSCDETGIAVYDDETGLLANQLYSQVKLHADYGGVVPELASRDHVRKTVPLIQAALKEANLSAKDIDGVAYTAGPGLVGALLVGATVGRALAFAWGVPAVPVHHMEGHLLAPMLEENAPEFPFVALLVSGGHTQLISVTGIGEYLLLGESVDDAAGEAFDKTAKLLGLDYPGGPMLSRMAQLGTAGRFTFPRPMTDRPGLDFSFSGLKTFAANTIRANGTDDQTRADIARAFEDAVVDTLAIKSKRALEQTGFKRLVIAGGVSANRTLRSKLAEMMQKRGGEVFYARPEFCTDNGAMIAYAGLIRLKSGVNSELSVSVRPRWPLAELPKV.

Fe cation-binding residues include His111 and His115. Substrate-binding positions include Leu134 to Gly138, Asp167, Gly180, and Asn272. Fe cation is bound at residue Asp300.

The protein belongs to the KAE1 / TsaD family. Fe(2+) serves as cofactor.

It localises to the cytoplasm. The enzyme catalyses L-threonylcarbamoyladenylate + adenosine(37) in tRNA = N(6)-L-threonylcarbamoyladenosine(37) in tRNA + AMP + H(+). Its function is as follows. Required for the formation of a threonylcarbamoyl group on adenosine at position 37 (t(6)A37) in tRNAs that read codons beginning with adenine. Is involved in the transfer of the threonylcarbamoyl moiety of threonylcarbamoyl-AMP (TC-AMP) to the N6 group of A37, together with TsaE and TsaB. TsaD likely plays a direct catalytic role in this reaction. In Yersinia enterocolitica serotype O:8 / biotype 1B (strain NCTC 13174 / 8081), this protein is tRNA N6-adenosine threonylcarbamoyltransferase.